An 889-amino-acid polypeptide reads, in one-letter code: MSNPFAYLAEPLDPAQPGKKFFNLNKLDYSRYGRLPFSIRVLLEAAVRNCDKFLVKKEDIENILNWNVTQHMNIEVPFKPARVILQDFTGVPSVVDFAAMRDAVKKLGGDPEKINPICPVDLVIDHSIQVDFNRRADSLQKNQDLEFERNRERFEFLKWGSKAFRNMRIIPPGSGIIHQVNLEYLARVVFDQDGYYYPDSLVGTDSHTTMIDGLGVLGWGVGGIEAEAVMLGQPISMVLPQVIGYRLMGKPHPLVTSTDIVLTITKHLRQVGVVGKFVEFFGLGVAQLSIADRATIANMCPEYGATATFFPVDEVSIKYLVQTGRDESKVKQIRKYLQAVGMFRDYSDPSQDPDFTQVVELDLKTVVPCCSGPKRPQDKVAVSDMKKDFESCLGAKQGFKGFQVAPDHHNDHKTFIYNDSEFTLSHGSVVIAAITSCTNTSNPSVMLGAGLLAKKAVDAGLNVKPYVKTSLSPGSGVVTYYLRESGVMPYLSQLGFDVVGYGCMTCIGNSGPLPEPVVEAITQGDLVAVGVLSGNRNFEGRVHPNTRANYLASPPLVIAYAIAGTIRIDFEKEPLGTNAKGQQVFLRDIWPTREEIQAVERQYVIPGMFTEVYQKIETVNASWNALAAPSDKLYLWNPKSTYIKSPPFFENLTLDLQPPKSIVDAYVLLNLGDSVTTDHISPAGNIARNSPAARYLTNRGLTPREFNSYGSRRGNDAIMARGTFANIRLLNRFLNKQAPQTIHLPSGETLDVFDAAERYQQEGHPLIVLAGKEYGSGSSRDWAAKGPFLLGIKAVLAESYERIHRSNLVGMGVIPLEYLPGENADSLGLTGRERYTIIIPENLTPRMHVQVKLDTGKTFQAVIRFDTDVELTYLHNGGILNYMIRKMAK.

Substrate-binding positions include Gln-86 and 205-207 (DSH). [4Fe-4S] cluster contacts are provided by Cys-437, Cys-503, and Cys-506. Substrate is bound by residues Arg-536, Arg-541, Arg-699, and 779-780 (SR).

The protein belongs to the aconitase/IPM isomerase family. As to quaternary structure, interacts (when associated with the 4Fe-4S) with FBXL5. Interacts with frataxin(81-210). Requires [4Fe-4S] cluster as cofactor.

It localises to the cytoplasm. The protein localises to the cytosol. The enzyme catalyses citrate = D-threo-isocitrate. Bifunctional iron sensor that switches between 2 activities depending on iron availability. Iron deprivation, promotes its mRNA binding activity through which it regulates the expression of genes involved in iron uptake, sequestration and utilization. Binds to iron-responsive elements (IRES) in the untranslated region of target mRNAs preventing for instance the translation of ferritin and aminolevulinic acid synthase and stabilizing the transferrin receptor mRNA. Functionally, conversely, when cellular iron levels are high, binds a 4Fe-4S cluster which precludes RNA binding activity and promotes the aconitase activity, the isomerization of citrate to isocitrate via cis-aconitate. This Oryctolagus cuniculus (Rabbit) protein is Cytoplasmic aconitate hydratase (ACO1).